A 154-amino-acid chain; its full sequence is Small ribosomal subunit protein uS13m (154 aa).

A mitochondrion-targeting transit peptide spans 1-30; it reads MLGLRRSATTLFDISQSLLRNVTFHGLRVQ. The disordered stretch occupies residues 121 to 154; sequence RHGLPCRGQRTSTNARTKKGKAVAIAGKKKAPRK. The segment covering 136–154 has biased composition (basic residues); sequence RTKKGKAVAIAGKKKAPRK.

Belongs to the universal ribosomal protein uS13 family. In terms of assembly, part of the small ribosomal subunit.

It is found in the mitochondrion. In terms of biological role, located at the top of the head of the small subunit, it contacts several helices of the 18S rRNA. This is Small ribosomal subunit protein uS13m (RPS13) from Arabidopsis thaliana (Mouse-ear cress).